We begin with the raw amino-acid sequence, 206 residues long: Small ribosomal subunit protein uS4 (206 aa).

The S4 RNA-binding domain occupies 96 to 156 (GRLDNVVYRM…EKAKKQSRVK (61 aa)).

Belongs to the universal ribosomal protein uS4 family. In terms of assembly, part of the 30S ribosomal subunit. Contacts protein S5. The interaction surface between S4 and S5 is involved in control of translational fidelity.

Its function is as follows. One of the primary rRNA binding proteins, it binds directly to 16S rRNA where it nucleates assembly of the body of the 30S subunit. In terms of biological role, with S5 and S12 plays an important role in translational accuracy. The sequence is that of Small ribosomal subunit protein uS4 from Klebsiella pneumoniae (strain 342).